We begin with the raw amino-acid sequence, 439 residues long: Acyl-coenzyme A thioesterase 9, mitochondrial (439 aa).

A mitochondrion-targeting transit peptide spans Met1–Gly21. HotDog ACOT-type domains lie at Lys84 to Glu209 and Glu289 to Val401. At Lys103 the chain carries N6-acetyllysine.

This sequence belongs to the acyl coenzyme A hydrolase family. In terms of assembly, interacts with NYAP1, NYAP2 and MYO16.

The protein localises to the mitochondrion. Its subcellular location is the mitochondrion matrix. It localises to the mitochondrion inner membrane. The enzyme catalyses butanoyl-CoA + H2O = butanoate + CoA + H(+). The catalysed reaction is propanoyl-CoA + H2O = propanoate + CoA + H(+). It carries out the reaction hexadecanoyl-CoA + H2O = hexadecanoate + CoA + H(+). It catalyses the reaction octanoyl-CoA + H2O = octanoate + CoA + H(+). The enzyme catalyses decanoyl-CoA + H2O = decanoate + CoA + H(+). The catalysed reaction is tetradecanoyl-CoA + H2O = tetradecanoate + CoA + H(+). It carries out the reaction 4,8-dimethylnonanoyl-CoA + H2O = 4,8-dimethylnonanoate + CoA + H(+). It catalyses the reaction 3-methylbutanoyl-CoA + H2O = 3-methylbutanoate + CoA + H(+). The enzyme catalyses 2-methylpropanoyl-CoA + H2O = 2-methylpropanoate + CoA + H(+). It participates in lipid metabolism; fatty acid metabolism. With respect to regulation, strongly inhibited by NADH and CoA. Functionally, mitochondrial acyl-CoA thioesterase. Catalyzes the hydrolysis of acyl-CoAs into free fatty acids and coenzyme A (CoA), regulating their respective intracellular levels. Regulates both mitochondrial lipid and amino acid metabolism. This Homo sapiens (Human) protein is Acyl-coenzyme A thioesterase 9, mitochondrial.